Here is a 144-residue protein sequence, read N- to C-terminus: Large ribosomal subunit protein uL15 (144 aa).

The disordered stretch occupies residues 1–52 (MIKLESLQDPSPRKRRKKLLGRGPGSGHGKTSGRGHKGDGSRSGYKRRFGYE). Residues 22–32 (RGPGSGHGKTS) are compositionally biased toward gly residues.

The protein belongs to the universal ribosomal protein uL15 family. In terms of assembly, part of the 50S ribosomal subunit.

Its function is as follows. Binds to the 23S rRNA. This chain is Large ribosomal subunit protein uL15, found in Chlamydia felis (strain Fe/C-56) (Chlamydophila felis).